Here is a 97-residue protein sequence, read N- to C-terminus: Putative membrane protein insertion efficiency factor (97 aa).

The segment at 77–97 (VPDAPASPSPSSSCSCKGPHP) is disordered. Low complexity predominate over residues 85–97 (SPSSSCSCKGPHP).

This sequence belongs to the UPF0161 family.

Its subcellular location is the cell inner membrane. Its function is as follows. Could be involved in insertion of integral membrane proteins into the membrane. This chain is Putative membrane protein insertion efficiency factor, found in Xanthomonas euvesicatoria pv. vesicatoria (strain 85-10) (Xanthomonas campestris pv. vesicatoria).